Reading from the N-terminus, the 334-residue chain is Biotin synthase (334 aa).

Residues 55-280 form the Radical SAM core domain; that stretch reads EEIEVEGIIS…HTMLRFAGGR (226 aa). 3 residues coordinate [4Fe-4S] cluster: cysteine 70, cysteine 74, and cysteine 77. 3 residues coordinate [2Fe-2S] cluster: cysteine 113, cysteine 205, and arginine 275.

The protein belongs to the radical SAM superfamily. Biotin synthase family. In terms of assembly, homodimer. [4Fe-4S] cluster is required as a cofactor. [2Fe-2S] cluster serves as cofactor.

The enzyme catalyses (4R,5S)-dethiobiotin + (sulfur carrier)-SH + 2 reduced [2Fe-2S]-[ferredoxin] + 2 S-adenosyl-L-methionine = (sulfur carrier)-H + biotin + 2 5'-deoxyadenosine + 2 L-methionine + 2 oxidized [2Fe-2S]-[ferredoxin]. It participates in cofactor biosynthesis; biotin biosynthesis; biotin from 7,8-diaminononanoate: step 2/2. Its function is as follows. Catalyzes the conversion of dethiobiotin (DTB) to biotin by the insertion of a sulfur atom into dethiobiotin via a radical-based mechanism. This is Biotin synthase from Corynebacterium glutamicum (strain ATCC 13032 / DSM 20300 / JCM 1318 / BCRC 11384 / CCUG 27702 / LMG 3730 / NBRC 12168 / NCIMB 10025 / NRRL B-2784 / 534).